The sequence spans 297 residues: Homoserine kinase (297 aa).

85 to 95 provides a ligand contact to ATP; that stretch reads PPTRGMGSSSA.

Belongs to the GHMP kinase family. Homoserine kinase subfamily.

The protein localises to the cytoplasm. It catalyses the reaction L-homoserine + ATP = O-phospho-L-homoserine + ADP + H(+). Its pathway is amino-acid biosynthesis; L-threonine biosynthesis; L-threonine from L-aspartate: step 4/5. Catalyzes the ATP-dependent phosphorylation of L-homoserine to L-homoserine phosphate. This chain is Homoserine kinase, found in Desulfitobacterium hafniense (strain DSM 10664 / DCB-2).